Here is a 371-residue protein sequence, read N- to C-terminus: Vasopressin V2 receptor (371 aa).

Topologically, residues 1–38 are extracellular; sequence MLLVSTVSAVPGLFSPPSSPSNSSQEELLDDRDPLLVR. N-linked (GlcNAc...) asparagine glycosylation is present at asparagine 22. A helical membrane pass occupies residues 39–63; the sequence is AELALLSTIFVAVALSNGLVLGALI. Residues 64-77 lie on the Cytoplasmic side of the membrane; it reads RRGRRGRWAPMHVF. Residues 78–98 traverse the membrane as a helical segment; the sequence is ISHLCLADLAVALFQVLPQLA. The Extracellular segment spans residues 99–113; the sequence is WDATDRFHGPDALCR. The chain crosses the membrane as a helical span at residues 114-135; the sequence is AVKYLQMVGMYASSYMILAMTL. At 136–159 the chain is on the cytoplasmic side; that stretch reads DRHRAICRPMLAYRHGGGARWNRP. The helical transmembrane segment at 160–180 threads the bilayer; it reads VLVAWAFSLLLSLPQLFIFAQ. The Extracellular portion of the chain corresponds to 181–200; that stretch reads RDVGNGSGVFDCWARFAEPW. Asparagine 185 is a glycosylation site (N-linked (GlcNAc...) asparagine). A helical transmembrane segment spans residues 201 to 220; that stretch reads GLRAYVTWIALMVFVAPALG. Residues 221–271 lie on the Cytoplasmic side of the membrane; sequence IAACQVLIFREIHASLVPGPSERAGRRRRGRRTGSPSEGAHVSAAMAKTVR. Positions 240 to 260 are disordered; the sequence is PSERAGRRRRGRRTGSPSEGA. A helical transmembrane segment spans residues 272-293; that stretch reads MTLVIVIVYVLCWAPFFLVQLW. Residues 294 to 308 lie on the Extracellular side of the membrane; it reads AAWDPEAPLERPPFV. The helical transmembrane segment at 309–328 threads the bilayer; the sequence is LLMLLASLNSCTNPWIYASF. The Cytoplasmic portion of the chain corresponds to 329–371; that stretch reads SSSVSSELRSLLCCAQRHTTHSLGPQDESCATASSSLMKDTPS. Residues cysteine 341 and cysteine 342 are each lipidated (S-palmitoyl cysteine). The segment at 349-371 is disordered; it reads HSLGPQDESCATASSSLMKDTPS. The segment covering 357–371 has biased composition (polar residues); sequence SCATASSSLMKDTPS.

Belongs to the G-protein coupled receptor 1 family. Vasopressin/oxytocin receptor subfamily. In terms of assembly, interacts with ARRDC4. Identified in a complex containing at least ARRDC4, V2R and HGS. Interacts with TMEM147. As to expression, kidney.

It is found in the cell membrane. Receptor for arginine vasopressin. The activity of this receptor is mediated by G proteins which activate adenylate cyclase. Involved in renal water reabsorption. This chain is Vasopressin V2 receptor (Avpr2), found in Rattus norvegicus (Rat).